Reading from the N-terminus, the 197-residue chain is Allatostatins (197 aa).

The N-terminal stretch at 1 to 27 (MRSRTSVLTSSLAFLYFFGIVGRSALA) is a signal peptide. Residues 28-56 (MEETPASSMNLQHYNNMLNPMVFDDTMPE) constitute a propeptide that is removed on maturation. Ile-76 carries the post-translational modification Isoleucine amide. A propeptide spanning residues 80 to 86 (WIDTNDN) is cleaved from the precursor. 4 positions are modified to leucine amide: Leu-96, Leu-106, Leu-154, and Leu-184. Residues 161 to 197 (YSGGQPLGSKRPNDMLSQRYHFGLGKRMSEDEEESSQ) are disordered. Residues 188 to 197 (MSEDEEESSQ) constitute a propeptide that is removed on maturation.

It belongs to the allatostatin family.

Its subcellular location is the secreted. In terms of biological role, neuropeptides. The sequence is that of Allatostatins from Apis mellifera (Honeybee).